The sequence spans 364 residues: Aminomethyltransferase (364 aa).

It belongs to the GcvT family. As to quaternary structure, the glycine cleavage system is composed of four proteins: P, T, L and H.

It catalyses the reaction N(6)-[(R)-S(8)-aminomethyldihydrolipoyl]-L-lysyl-[protein] + (6S)-5,6,7,8-tetrahydrofolate = N(6)-[(R)-dihydrolipoyl]-L-lysyl-[protein] + (6R)-5,10-methylene-5,6,7,8-tetrahydrofolate + NH4(+). Its function is as follows. The glycine cleavage system catalyzes the degradation of glycine. This is Aminomethyltransferase from Shigella flexneri.